A 394-amino-acid polypeptide reads, in one-letter code: S-adenosylmethionine synthase 3 (394 aa).

Mg(2+) is bound at residue E11. H17 is a binding site for ATP. E45 provides a ligand contact to K(+). L-methionine contacts are provided by E58 and Q101. Residues D169 to K171, S237 to F240, D248, R254 to K255, A271, K275, and K279 each bind ATP. D248 contributes to the L-methionine binding site. Residue K279 participates in L-methionine binding.

It belongs to the AdoMet synthase family. As to quaternary structure, homotetramer. Mn(2+) is required as a cofactor. Mg(2+) serves as cofactor. It depends on Co(2+) as a cofactor. The cofactor is K(+).

It is found in the cytoplasm. The enzyme catalyses L-methionine + ATP + H2O = S-adenosyl-L-methionine + phosphate + diphosphate. It participates in amino-acid biosynthesis; S-adenosyl-L-methionine biosynthesis; S-adenosyl-L-methionine from L-methionine: step 1/1. Functionally, catalyzes the formation of S-adenosylmethionine from methionine and ATP. The reaction comprises two steps that are both catalyzed by the same enzyme: formation of S-adenosylmethionine (AdoMet) and triphosphate, and subsequent hydrolysis of the triphosphate. This is S-adenosylmethionine synthase 3 (SAM3) from Hordeum vulgare (Barley).